The sequence spans 140 residues: Methylglyoxal synthase (140 aa).

Residues 1 to 140 form the MGS-like domain; the sequence is MKIALIAHDR…HEGDRRPLAF (140 aa). Residues H8, K12, 34-37, and 54-55 contribute to the substrate site; these read TGTT and SG. The active-site Proton donor/acceptor is D60. H87 is a binding site for substrate.

It belongs to the methylglyoxal synthase family.

It carries out the reaction dihydroxyacetone phosphate = methylglyoxal + phosphate. Functionally, catalyzes the formation of methylglyoxal from dihydroxyacetone phosphate. The chain is Methylglyoxal synthase from Enterococcus faecalis (strain ATCC 700802 / V583).